We begin with the raw amino-acid sequence, 217 residues long: Probable GTP-binding protein EngB (217 aa).

In terms of domain architecture, EngB-type G spans 27 to 201 (TGIEVAFAGR…RDKLDTWFSE (175 aa)). Residues 35–42 (GRSNAGKS), 62–66 (GRTQL), 80–83 (DLPG), 147–150 (TKAD), and 180–182 (FSS) contribute to the GTP site. Residues serine 42 and threonine 64 each contribute to the Mg(2+) site.

The protein belongs to the TRAFAC class TrmE-Era-EngA-EngB-Septin-like GTPase superfamily. EngB GTPase family. Mg(2+) is required as a cofactor.

Its function is as follows. Necessary for normal cell division and for the maintenance of normal septation. This Edwardsiella ictaluri (strain 93-146) protein is Probable GTP-binding protein EngB.